Reading from the N-terminus, the 227-residue chain is Cytidylate kinase (227 aa).

12–20 is an ATP binding site; sequence GPSGAGKGT.

It belongs to the cytidylate kinase family. Type 1 subfamily.

It is found in the cytoplasm. The enzyme catalyses CMP + ATP = CDP + ADP. It carries out the reaction dCMP + ATP = dCDP + ADP. This Shigella boydii serotype 4 (strain Sb227) protein is Cytidylate kinase.